A 194-amino-acid chain; its full sequence is SRP-independent targeting protein 3 homolog (194 aa).

2 helical membrane passes run 43-63 and 110-130; these read ILYA…KIII and LVTI…PPLL.

This sequence belongs to the PHO88 family.

The protein localises to the endoplasmic reticulum membrane. May function in a SRP (signal recognition particle) and GET (guided entry of tail-anchored proteins) independent pathway for targeting a broad range of substrate proteins to the endoplasmic reticulum. Involved in inorganic phosphate uptake. Also involved in telomere length regulation and maintenance. The polypeptide is SRP-independent targeting protein 3 homolog (Schizosaccharomyces pombe (strain 972 / ATCC 24843) (Fission yeast)).